Consider the following 316-residue polypeptide: MRIYSLIDSQTLMTKGFASEVMRSPEPPKKWDIAKKKGGMRTIYHPSSKVKLIQYWLMNNVFSKLPMHNAAYAFVKNRSIKSNALLHAESKNKYYVKIDLKDFFPSIKFTDFEYAFTRYRDRIEFTTEYDKELLQLIKTICFISDSTLPIGFPTSPLIANFVARELDEKLTQKLNAIDKLNATYTRYADDIIVSTNMKGASKLILDCFKRTMKEIGPDFKINIKKFKICSASGGSIVVTGLKVCHDFHITLHRSMKDKIRLHLSLLSKGILKDEDHNKLSGYIAYAKDIDPHFYTKLNRKYFQEIKWIQNLHNKVE.

In terms of domain architecture, Reverse transcriptase spans 1 to 243 (MRIYSLIDSQ…GSIVVTGLKV (243 aa)). 3 residues coordinate Mg(2+): D99, D189, and D190. The necessary and required for recognition and binding of RNA stretch occupies residues 247–316 (FHITLHRSMK…WIQNLHNKVE (70 aa)).

It belongs to the bacterial reverse transcriptase family.

It catalyses the reaction DNA(n) + a 2'-deoxyribonucleoside 5'-triphosphate = DNA(n+1) + diphosphate. Its function is as follows. Reverse transcriptase (RT) component of antiviral defense system retron Ec73, composed of a non-coding RNA (ncRNA) followed by a ribosyltransferase/DNA-binding protein then a reverse transcriptase (RT). Expression of this retron confers protection against bacteriophages SECphi4, SECphi6, SECphi27 and P1. At multiplicity of infection (MOI) of 0.02 cultures grow normally when infected with SECphi4 without collapsing, at MOI 2 cultures enter growth stasis. Responsible for synthesis of msDNA-Ec73 (a branched molecule with RNA linked by a 2',5'-phosphodiester bond to ssDNA). The retron transcript serves as primer (from a conserved internal G residue) and template for the reaction, and codes for the RT. Recognizes only its cognate RNA as a primer template. This Escherichia coli protein is Retron Ec73 reverse transcriptase.